A 58-amino-acid polypeptide reads, in one-letter code: UPF0434 protein Daro_3207 (58 aa).

Belongs to the UPF0434 family.

This chain is UPF0434 protein Daro_3207, found in Dechloromonas aromatica (strain RCB).